Here is a 266-residue protein sequence, read N- to C-terminus: Integral membrane protein 2B (266 aa).

Over 1 to 54 (MVKVTFNSALAQKEAKKDESKSGEEALIIPPDAVAVDCKDPDEVVPVGQRRAWC) the chain is Cytoplasmic. Residues 55–75 (WCMCFGLAFMLAGVILGGAYL) traverse the membrane as a helical; Signal-anchor for type II membrane protein segment. Topologically, residues 76 to 266 (YKYFAFQPDD…RFAVETLICP (191 aa)) are lumenal. A necessary for interaction with APP and inhibitor effects on APP processing region spans residues 102-134 (EPSADAPASRYQTIEENIKIFEEDEVEFISVPV). The region spanning 137-231 (FADSDPANIV…LCHDKETYKL (95 aa)) is the BRICHOS domain. Disulfide bonds link C164–C223 and C248–C265. An N-linked (GlcNAc...) asparagine glycan is attached at N170.

This sequence belongs to the ITM2 family. In terms of assembly, homodimer; disulfide-linked. Interacts with SPPL2A and SPPL2B. Interacts with APP. Mature BRI2 (mBRI2) interacts with the APP amyloid-beta A4 protein; the interaction occurs at the cell surface and in the endocytic compartments and enable alpha- and beta-secretase-induced APP cleavage inhibition. Mature BRI2 (mBRI2) interacts with the APP C99; the interaction occurs in the endocytic compartments and enable gamma-secretase-induced C99 cleavage inhibition. May form heterodimers with Bri23 peptide and APP amyloid-beta protein 40. Interacts with ADAM7 in sperm; the interaction increases following capacitation. Post-translationally, the ectodomain C-terminal part of the imBRI2 is processed by furin producing a secreted Bri23 peptide and a mature BRI2, membrane form (mBRI2). The remaining part of the ectodomain of mBRI2 containing the BRICHOS domain is cleaved by ADAM10 and is secreted (BRI2C, soluble form). The membrane-bound N-terminal fragment (BRI2C, membrane form) is further proteolytically processed by SPPL2A and SPPL2B through regulated intramembrane proteolysis producing a secreted C-peptide and a BRI2 intracellular domain (BRI2 ICD) released in the cytosol. Shedding by ADAM10 facilitates intramembrane cleavage but is not absolutely required for BRI2 ICD generation. Glycosylation at Asn-170 is important for cell surface localization, but doesn't affect furin- and ADAM10-induced proteolytic processing.

The protein resides in the golgi apparatus membrane. It localises to the cell membrane. It is found in the endosome membrane. Its subcellular location is the secreted. In terms of biological role, plays a regulatory role in the processing of the amyloid-beta A4 precursor protein (APP) and acts as an inhibitor of the amyloid-beta peptide aggregation and fibrils deposition. Plays a role in the induction of neurite outgrowth. Functions as a protease inhibitor by blocking access of secretases to APP cleavage sites. Functionally, mature BRI2 (mBRI2) functions as a modulator of the amyloid-beta A4 precursor protein (APP) processing leading to a strong reduction in the secretion of secretase-processed amyloid-beta protein 40 and amyloid-beta protein 42. Bri23 peptide prevents aggregation of APP amyloid-beta protein 42 into toxic oligomers. The protein is Integral membrane protein 2B (ITM2B) of Bos taurus (Bovine).